Reading from the N-terminus, the 267-residue chain is Undecaprenyl-diphosphatase (267 aa).

8 helical membrane-spanning segments follow: residues 1 to 21 (MSYF…FLPI), 39 to 59 (QGLA…VIYF), 83 to 103 (AKLA…GLLM), 111 to 131 (LRSA…LWWV), 144 to 164 (AGWK…IPGT), 189 to 209 (FLMS…KLVT), 218 to 238 (TLLT…HFFL), and 246 to 266 (MTPF…FLMM).

It belongs to the UppP family.

It localises to the cell inner membrane. It carries out the reaction di-trans,octa-cis-undecaprenyl diphosphate + H2O = di-trans,octa-cis-undecaprenyl phosphate + phosphate + H(+). Functionally, catalyzes the dephosphorylation of undecaprenyl diphosphate (UPP). Confers resistance to bacitracin. The protein is Undecaprenyl-diphosphatase of Vibrio atlanticus (strain LGP32) (Vibrio splendidus (strain Mel32)).